The sequence spans 416 residues: D-amino acid dehydrogenase (416 aa).

3–17 (ITILGSGVIGVTTAY) serves as a coordination point for FAD.

The protein belongs to the DadA oxidoreductase family. It depends on FAD as a cofactor.

It catalyses the reaction a D-alpha-amino acid + A + H2O = a 2-oxocarboxylate + AH2 + NH4(+). In terms of biological role, oxidative deamination of D-amino acids. In Brucella suis biovar 1 (strain 1330), this protein is D-amino acid dehydrogenase.